A 926-amino-acid polypeptide reads, in one-letter code: UvrABC system protein A (926 aa).

31 to 38 provides a ligand contact to ATP; sequence GPSGSGKS. The C4-type zinc finger occupies 251–278; sequence CPEHGFSIPELSARLFSFNSPYGACPSC. ABC transporter domains follow at residues 308–568 and 588–916; these read SGYF…PSSL and PSGK…KYLR. 620-627 serves as a coordination point for ATP; that stretch reads GVSGSGKS. The C4-type zinc finger occupies 719–745; it reads CEACQGEGVIKVEMHFLPPVYVTCEVC.

The protein belongs to the ABC transporter superfamily. UvrA family. As to quaternary structure, forms a heterotetramer with UvrB during the search for lesions.

Its subcellular location is the cytoplasm. Its function is as follows. The UvrABC repair system catalyzes the recognition and processing of DNA lesions. UvrA is an ATPase and a DNA-binding protein. A damage recognition complex composed of 2 UvrA and 2 UvrB subunits scans DNA for abnormalities. When the presence of a lesion has been verified by UvrB, the UvrA molecules dissociate. The sequence is that of UvrABC system protein A from Aquifex aeolicus (strain VF5).